We begin with the raw amino-acid sequence, 510 residues long: Glycerol kinase (510 aa).

Thr-12 contributes to the ADP binding site. ATP is bound by residues Thr-12, Thr-13, and Ser-14. A sn-glycerol 3-phosphate-binding site is contributed by Thr-12. Arg-16 is a binding site for ADP. Sn-glycerol 3-phosphate is bound by residues Arg-82, Glu-83, and Tyr-134. 3 residues coordinate glycerol: Arg-82, Glu-83, and Tyr-134. Position 230 is a phosphohistidine; by HPr (His-230). Asp-244 provides a ligand contact to sn-glycerol 3-phosphate. Residues Asp-244 and Gln-245 each contribute to the glycerol site. Positions 266 and 309 each coordinate ADP. Positions 266, 309, 313, and 410 each coordinate ATP. 2 residues coordinate ADP: Gly-410 and Asn-414.

The protein belongs to the FGGY kinase family. Homotetramer and homodimer (in equilibrium). Post-translationally, the phosphoenolpyruvate-dependent sugar phosphotransferase system (PTS), including enzyme I, and histidine-containing protein (HPr) are required for the phosphorylation, which leads to the activation of the enzyme.

The catalysed reaction is glycerol + ATP = sn-glycerol 3-phosphate + ADP + H(+). It participates in polyol metabolism; glycerol degradation via glycerol kinase pathway; sn-glycerol 3-phosphate from glycerol: step 1/1. With respect to regulation, activated by phosphorylation and inhibited by fructose 1,6-bisphosphate (FBP). Key enzyme in the regulation of glycerol uptake and metabolism. Catalyzes the phosphorylation of glycerol to yield sn-glycerol 3-phosphate. The sequence is that of Glycerol kinase from Bacillus cereus (strain ATCC 10987 / NRS 248).